Here is a 1169-residue protein sequence, read N- to C-terminus: Protein qua-1 (1169 aa).

A signal peptide spans 1-22; the sequence is MRRLSAILPILLLSNFWPTVES. 2 disordered regions span residues 261–338 and 368–933; these read GATG…AGTN and AGGV…RTSS. Low complexity predominate over residues 278-292; it reads ESNGNNNNSFEGGRS. Over residues 312–337 the composition is skewed to gly residues; it reads GAGGKGGAGADGAAGSGAGAGAGAGT. Composition is skewed to acidic residues over residues 426 to 437 and 453 to 464; these read DEEDEEDNGDED and DDGDGDEDDDGT. The span at 511–523 shows a compositional bias: basic and acidic residues; that stretch reads SPDDNDLLEKDEN. Gly residues-rich tracts occupy residues 526 to 536, 545 to 572, 605 to 634, 656 to 700, and 727 to 752; these read NGKGGAGNGNG, KGNGTGDGDGDGNGNGNGLTGDGNGTGD, DGNGNGTGDGNGDGNDNGNGSKGLGTGSGD, GSNG…GGTG, and NAEGNGKGNGNDGKGSGSGDGSGAGG. The span at 753 to 774 shows a compositional bias: basic and acidic residues; sequence KGDKSDSESGNEADGKDGKKNE. Over residues 775-791 the composition is skewed to gly residues; the sequence is GAGGEAAAGSGGANKGG. Residues 793–803 are compositionally biased toward acidic residues; the sequence is DGDDDDVDVTD. The segment covering 840-855 has biased composition (polar residues); that stretch reads GTVQTGAKHNAESSAS. Low complexity predominate over residues 889–906; that stretch reads SGTSESVTNGSGATESGS. A compositionally biased stretch (gly residues) spans 907 to 923; it reads TGSGTTGTGTSGTGSSG. The segment covering 924 to 933 has biased composition (low complexity); it reads TGASAARTSS.

As to expression, transiently expressed in head cells.

It localises to the cytoplasmic vesicle. Its subcellular location is the secreted. The protein localises to the extracellular space. The protein resides in the extracellular matrix. In terms of biological role, required for cuticle shedding and normal alae morphology and localization, and subsequently larval development. The polypeptide is Protein qua-1 (Caenorhabditis elegans).